The sequence spans 325 residues: Putative HTH-type transcriptional regulatory protein MK1005 (325 aa).

In terms of domain architecture, HTH cro/C1-type spans 128–190 (VDELDVSRVR…FERRVAELLE (63 aa)). Positions 139–158 (RQLRREGGRITLARAEEADV) form a DNA-binding region, H-T-H motif.

This chain is Putative HTH-type transcriptional regulatory protein MK1005, found in Methanopyrus kandleri (strain AV19 / DSM 6324 / JCM 9639 / NBRC 100938).